The chain runs to 304 residues: Putative integrase/recombinase HI_1414 (304 aa).

The Core-binding (CB) domain occupies 30–109 (TLFSDVIKRY…TIGHIFKIAL (80 aa)). The Tyr recombinase domain maps to 131–304 (PRTQRVTEEN…DMAEVAELLD (174 aa)). Active-site residues include arginine 174, lysine 199, histidine 256, arginine 259, and histidine 281. Tyrosine 291 (O-(3'-phospho-DNA)-tyrosine intermediate) is an active-site residue.

It belongs to the 'phage' integrase family.

In Haemophilus influenzae (strain ATCC 51907 / DSM 11121 / KW20 / Rd), this protein is Putative integrase/recombinase HI_1414.